We begin with the raw amino-acid sequence, 478 residues long: NADH-ubiquinone oxidoreductase 49 kDa subunit, mitochondrial (478 aa).

The N-terminal 42 residues, methionine 1 to tyrosine 42, are a transit peptide targeting the mitochondrion. Residues cysteine 341, cysteine 347, and cysteine 362 each contribute to the [4Fe-4S] cluster site.

This sequence belongs to the complex I 49 kDa subunit family. As to quaternary structure, complex I is composed of about 40 different subunits. [4Fe-4S] cluster is required as a cofactor.

The protein resides in the mitochondrion inner membrane. It carries out the reaction a ubiquinone + NADH + 5 H(+)(in) = a ubiquinol + NAD(+) + 4 H(+)(out). Functionally, core subunit of the mitochondrial membrane respiratory chain NADH dehydrogenase (Complex I) that is believed to belong to the minimal assembly required for catalysis. Complex I functions in the transfer of electrons from NADH to the respiratory chain. The immediate electron acceptor for the enzyme is believed to be ubiquinone. This Neurospora crassa (strain ATCC 24698 / 74-OR23-1A / CBS 708.71 / DSM 1257 / FGSC 987) protein is NADH-ubiquinone oxidoreductase 49 kDa subunit, mitochondrial (nuo-49).